The primary structure comprises 325 residues: Probable siderophore-binding lipoprotein YfiY (325 aa).

Positions 1–20 are cleaved as a signal peptide; the sequence is MKKHISMLFVFLMAVMVLSA. C21 is lipidated: N-palmitoyl cysteine. C21 carries S-diacylglycerol cysteine lipidation. The 270-residue stretch at 56–325 folds into the Fe/B12 periplasmic-binding domain; that stretch reads RIVVLTNEGT…DIETYFLKTK (270 aa). Position 290 is a phosphoserine (S290). T302 bears the Phosphothreonine mark.

Belongs to the bacterial solute-binding protein 8 family. The complex is composed of one ATP-binding protein (YusV), two transmembrane proteins (YfiZ and YfhA) and a solute-binding protein (YfiY). Interacts with FloT.

It is found in the cell membrane. Its subcellular location is the cytoplasm. It localises to the membrane raft. Its function is as follows. Part of the ABC transporter complex YfiYZ/YfhA/YusV involved in import of the iron-hydroxamate siderophores schizokinen, arthrobactin and corprogen. Binds the siderophores and delivers them to the surface of YfiZ/YfhA. In Bacillus subtilis (strain 168), this protein is Probable siderophore-binding lipoprotein YfiY (yfiY).